Consider the following 434-residue polypeptide: 3-phosphoshikimate 1-carboxyvinyltransferase (434 aa).

3 residues coordinate 3-phosphoshikimate: lysine 22, serine 23, and arginine 27. Position 22 (lysine 22) interacts with phosphoenolpyruvate. Phosphoenolpyruvate contacts are provided by glycine 93 and arginine 121. Positions 168, 169, 170, 199, 320, and 347 each coordinate 3-phosphoshikimate. Residue glutamine 170 participates in phosphoenolpyruvate binding. Aspartate 320 functions as the Proton acceptor in the catalytic mechanism. Positions 351, 394, and 419 each coordinate phosphoenolpyruvate.

Belongs to the EPSP synthase family. Monomer.

The protein localises to the cytoplasm. The catalysed reaction is 3-phosphoshikimate + phosphoenolpyruvate = 5-O-(1-carboxyvinyl)-3-phosphoshikimate + phosphate. Its pathway is metabolic intermediate biosynthesis; chorismate biosynthesis; chorismate from D-erythrose 4-phosphate and phosphoenolpyruvate: step 6/7. Catalyzes the transfer of the enolpyruvyl moiety of phosphoenolpyruvate (PEP) to the 5-hydroxyl of shikimate-3-phosphate (S3P) to produce enolpyruvyl shikimate-3-phosphate and inorganic phosphate. This is 3-phosphoshikimate 1-carboxyvinyltransferase from Paraburkholderia phytofirmans (strain DSM 17436 / LMG 22146 / PsJN) (Burkholderia phytofirmans).